Consider the following 264-residue polypeptide: uncharacterized protein (264 aa).

Residues 235-264 (ESSDEEDNDDDIINNDTNNDINNDDIEIKT) are disordered. A compositionally biased stretch (acidic residues) spans 237–247 (SDEEDNDDDII).

This is an uncharacterized protein from Acanthamoeba polyphaga mimivirus (APMV).